We begin with the raw amino-acid sequence, 428 residues long: uncharacterized protein (428 aa).

Histidine 68 lines the Zn(2+) pocket. Glutamate 71 acts as the Proton acceptor in catalysis. Zn(2+) contacts are provided by histidine 72 and glutamate 143.

The protein belongs to the peptidase M16 family. Requires Zn(2+) as cofactor.

This is an uncharacterized protein from Bacillus subtilis (strain 168).